Reading from the N-terminus, the 348-residue chain is EGF-like domain containing protein 1 (348 aa).

A signal peptide spans 1–19 (MFYLSTFMTIVISLSLVSC). Residues 60–92 (TGSDCKVTCQNNGRCYDGNKCLCSSDYTGHLCE) form the EGF-like domain. Disulfide bonds link Cys64–Cys74, Cys68–Cys80, and Cys82–Cys91. A ZP domain is found at 99 to 342 (RCTLDGVVFE…PTCAAPAVSQ (244 aa)).

In terms of tissue distribution, prismatic layer of shell (at protein level). Expressed primarily in the mantle with highest level in the mantle edge and lower level in the mantle pallium.

It localises to the secreted. The polypeptide is EGF-like domain containing protein 1 (Margaritifera margaritifera (Freshwater pearl mussel)).